We begin with the raw amino-acid sequence, 457 residues long: MTTSHQPQDRYKAVWLIFFVLGLGTLLPWNFFITATQYFTSRLNTSQNISLVTNQSCESTEALADPSVSLPARSSLSAIFNNVMTLCAMLPLLIFTCLNSFLHQKVSQSLRILGSLLAILLVFLVTATLVKVQMDALSFFIITMIKIVLINSFGAILQASLFGLAGVLPANYTAPIMSGQGLAGFFTSVAMICAVASGSKLSESAFGYFITACAVVILAILCYLALPWMEFYRHYLQLNLAGPAEQETKLDLISEGEEPRGGREESGVPGPNSLPANRNQSIKAILKSIWVLALSVCFIFTVTIGLFPAVTAEVESSIAGTSPWKNCYFIPVACFLNFNVFDWLGRSLTAICMWPGQDSRWLPVLVACRVVFIPLLMLCNVKQHHYLPSLFKHDVWFITFMAAFAFSNGYLASLCMCFGPKKVKPAEAETAGNIMSFFLCLGLALGAVLSFLLRALV.

Over 1 to 12 the chain is Cytoplasmic; the sequence is MTTSHQPQDRYK. A helical transmembrane segment spans residues 13–29; it reads AVWLIFFVLGLGTLLPW. The Extracellular segment spans residues 30–82; it reads NFFITATQYFTSRLNTSQNISLVTNQSCESTEALADPSVSLPARSSLSAIFNN. N-linked (GlcNAc...) asparagine glycosylation is found at N44, N48, and N54. The chain crosses the membrane as a helical span at residues 83–107; the sequence is VMTLCAMLPLLIFTCLNSFLHQKVS. Residues 108-111 are Cytoplasmic-facing; that stretch reads QSLR. The chain crosses the membrane as a helical span at residues 112 to 130; it reads ILGSLLAILLVFLVTATLV. The Extracellular portion of the chain corresponds to 131–138; that stretch reads KVQMDALS. A helical transmembrane segment spans residues 139-157; it reads FFIITMIKIVLINSFGAIL. At 158-174 the chain is on the cytoplasmic side; sequence QASLFGLAGVLPANYTA. Residues 175–199 traverse the membrane as a helical segment; that stretch reads PIMSGQGLAGFFTSVAMICAVASGS. At 200–206 the chain is on the extracellular side; the sequence is KLSESAF. Residues 207 to 227 traverse the membrane as a helical segment; that stretch reads GYFITACAVVILAILCYLALP. The Cytoplasmic segment spans residues 228-291; it reads WMEFYRHYLQ…IKAILKSIWV (64 aa). S254 carries the post-translational modification Phosphoserine. Residues 255-266 show a composition bias toward basic and acidic residues; sequence EGEEPRGGREES. Positions 255–275 are disordered; the sequence is EGEEPRGGREESGVPGPNSLP. S273 is subject to Phosphoserine. A helical membrane pass occupies residues 292-311; that stretch reads LALSVCFIFTVTIGLFPAVT. Topologically, residues 312–323 are extracellular; the sequence is AEVESSIAGTSP. Residues 324–343 form a helical membrane-spanning segment; the sequence is WKNCYFIPVACFLNFNVFDW. Residues 344-360 are Cytoplasmic-facing; that stretch reads LGRSLTAICMWPGQDSR. A helical membrane pass occupies residues 361–379; sequence WLPVLVACRVVFIPLLMLC. Over 380–394 the chain is Extracellular; sequence NVKQHHYLPSLFKHD. Residues 395–414 traverse the membrane as a helical segment; it reads VWFITFMAAFAFSNGYLASL. Over 415 to 432 the chain is Cytoplasmic; that stretch reads CMCFGPKKVKPAEAETAG. Residues 433-453 form a helical membrane-spanning segment; it reads NIMSFFLCLGLALGAVLSFLL. Residues 454-457 are Extracellular-facing; it reads RALV.

It belongs to the SLC29A/ENT transporter (TC 2.A.57) family. As to quaternary structure, identified in a complex with STOM. In terms of tissue distribution, expressed in jejunum, liver and lung. Expressed in testis at the blood-testis barrier (at protein level). Expressed in ventricular myocytes (at protein level). Expressed in kidney.

It is found in the basolateral cell membrane. The protein localises to the apical cell membrane. It localises to the cell membrane. The enzyme catalyses adenosine(in) = adenosine(out). It catalyses the reaction guanosine(in) = guanosine(out). The catalysed reaction is inosine(in) = inosine(out). It carries out the reaction uridine(out) = uridine(in). The enzyme catalyses thymidine(in) = thymidine(out). It catalyses the reaction cytidine(in) = cytidine(out). The catalysed reaction is adenine(out) = adenine(in). It carries out the reaction guanine(out) = guanine(in). The enzyme catalyses thymine(out) = thymine(in). It catalyses the reaction uracil(in) = uracil(out). The catalysed reaction is hypoxanthine(out) = hypoxanthine(in). Its activity is regulated as follows. Transport activity is sensitive to low concentrations of the inhibitor nitrobenzylmercaptopurine riboside (NBMPR). Functionally, uniporter involved in the facilitative transport of nucleosides and nucleobases, and contributes to maintaining their cellular homeostasis. Functions as a Na(+)-independent transporter. Involved in the transport of nucleosides such as adenosine, thymidine and uridine. Also transports purine nucleobases (hypoxanthine, adenine, guanine) and pyrimidine nucleobases (thymine, uracil). Mediates basolateral nucleoside uptake into Sertoli cells, thereby regulating the transport of nucleosides in testis across the blood-testis barrier. Regulates inosine levels in brown adipocytes tissues (BAT) and extracellular inosine levels, which controls BAT-dependent energy expenditure. The protein is Equilibrative nucleoside transporter 1 of Rattus norvegicus (Rat).